A 366-amino-acid polypeptide reads, in one-letter code: Ribosomal RNA large subunit methyltransferase M (366 aa).

S-adenosyl-L-methionine is bound by residues Ser-188, 221–224, Asp-240, Asp-260, and Asp-277; that span reads CPGG. Catalysis depends on Lys-306, which acts as the Proton acceptor.

The protein belongs to the class I-like SAM-binding methyltransferase superfamily. RNA methyltransferase RlmE family. RlmM subfamily. As to quaternary structure, monomer.

It localises to the cytoplasm. It carries out the reaction cytidine(2498) in 23S rRNA + S-adenosyl-L-methionine = 2'-O-methylcytidine(2498) in 23S rRNA + S-adenosyl-L-homocysteine + H(+). Catalyzes the 2'-O-methylation at nucleotide C2498 in 23S rRNA. The polypeptide is Ribosomal RNA large subunit methyltransferase M (Photorhabdus sp. (strain Az29)).